The following is a 130-amino-acid chain: uncharacterized protein (130 aa).

Belongs to the thioester dehydratase family. FabZ subfamily.

This is an uncharacterized protein from Bacillus subtilis (strain 168).